We begin with the raw amino-acid sequence, 362 residues long: 45 kDa calcium-binding protein (362 aa).

A signal peptide spans 1 to 36 (MVWPWVAMASRWGPLIGLAPCCLWLLGAVLLMDASA). N-linked (GlcNAc...) asparagine glycosylation occurs at Asn40. EF-hand domains lie at 98 to 133 (RSRRKLMVIFSKVDVNTDRKISAKEMQRWIMEKTAE) and 137 to 172 (EAMEESKTHFRAVDPDGDGHVSWDEYKVKFLASKGH). Ser99 is subject to Phosphoserine. Asp111, Asn113, Asp115, Lys117, Glu122, Asp150, Asp152, Asp154, His156, and Glu161 together coordinate Ca(2+). Thr193 carries the phosphothreonine modification. 4 EF-hand domains span residues 197 to 232 (LENLKDRWYQADSPPADLLLTEEEFLSFLHPEHSRG), 233 to 268 (MLRFMVKEIVRDLDQDGDKQLSVPEFISLPVGTVEN), 278 to 313 (WVKDRKKEFEELIDSNHDGIVTAEELESYMDPMNEY), and 314 to 349 (NALNEAKQMIAVADENQNHHLEPEEVLKYSEFFTGS). Asp213 lines the Ca(2+) pocket. Thr217 is modified (phosphothreonine). 6 residues coordinate Ca(2+): Glu220, Asp246, Asp248, Asp250, Gln252, and Glu257. Phosphothreonine is present on Thr265. Ca(2+)-binding residues include Asp291, Asn293, and Asp295. Thr299 bears the Phosphothreonine mark. Residues Glu302, Asp327, Asn329, Asn331, His333, and Glu338 each coordinate Ca(2+). Residues 309 to 362 (PMNEYNALNEAKQMIAVADENQNHHLEPEEVLKYSEFFTGSKLVDYARSVHEEF) form a necessary for intracellular retention in Golgi apparatus lumen region.

The protein belongs to the CREC family. As to quaternary structure, isoform 5 interacts with STXBP1; the interaction is enhanced in presence of calcium. Isoform 5 interacts with STX3. Ubiquitous. Isoform 5 is expressed in pancreas.

It localises to the golgi apparatus lumen. Its subcellular location is the cytoplasm. It is found in the cell membrane. The protein resides in the cell projection. The protein localises to the bleb. Its function is as follows. May regulate calcium-dependent activities in the endoplasmic reticulum lumen or post-ER compartment. In terms of biological role, isoform 5 may be involved in the exocytosis of zymogens by pancreatic acini. The sequence is that of 45 kDa calcium-binding protein (SDF4) from Homo sapiens (Human).